The primary structure comprises 188 residues: Peptidyl-tRNA hydrolase (188 aa).

Tyrosine 15 is a tRNA binding site. The Proton acceptor role is filled by histidine 20. The tRNA site is built by phenylalanine 63, asparagine 65, and asparagine 111.

This sequence belongs to the PTH family. In terms of assembly, monomer.

The protein resides in the cytoplasm. It carries out the reaction an N-acyl-L-alpha-aminoacyl-tRNA + H2O = an N-acyl-L-amino acid + a tRNA + H(+). Hydrolyzes ribosome-free peptidyl-tRNAs (with 1 or more amino acids incorporated), which drop off the ribosome during protein synthesis, or as a result of ribosome stalling. In terms of biological role, catalyzes the release of premature peptidyl moieties from peptidyl-tRNA molecules trapped in stalled 50S ribosomal subunits, and thus maintains levels of free tRNAs and 50S ribosomes. In Hydrogenobaculum sp. (strain Y04AAS1), this protein is Peptidyl-tRNA hydrolase.